The chain runs to 56 residues: Small integral membrane protein 39 (56 aa).

The chain crosses the membrane as a helical span at residues valine 33–leucine 53.

Its subcellular location is the membrane. This Homo sapiens (Human) protein is Small integral membrane protein 39.